The primary structure comprises 862 residues: Ubiquitin carboxyl-terminal hydrolase 13 (862 aa).

The segment at 182 to 290 (QASKHAKSLV…KHLAHFGIDM (109 aa)) adopts a UBP-type; degenerate zinc-finger fold. Zn(2+) is bound by residues cysteine 206, cysteine 209, cysteine 226, and histidine 239. Residues 331 to 860 (TGMKNLGNSC…LGYIYFYHRI (530 aa)) form the USP domain. Cysteine 340 functions as the Nucleophile in the catalytic mechanism. 2 consecutive UBA domains span residues 647–688 (DIDE…IIAH) and 722–762 (QPPE…IFSH). The active-site Proton acceptor is the histidine 822.

Belongs to the peptidase C19 family.

It catalyses the reaction Thiol-dependent hydrolysis of ester, thioester, amide, peptide and isopeptide bonds formed by the C-terminal Gly of ubiquitin (a 76-residue protein attached to proteins as an intracellular targeting signal).. With respect to regulation, specifically inhibited by spautin-1 (specific and potent autophagy inhibitor-1), a derivative of MBCQ that binds to USP13 and inhibits deubiquitinase activity. Deubiquitinase that mediates deubiquitination of target proteins and is involved in various processes such as autophagy and endoplasmic reticulum-associated degradation (ERAD). This Gallus gallus (Chicken) protein is Ubiquitin carboxyl-terminal hydrolase 13 (USP13).